Here is a 167-residue protein sequence, read N- to C-terminus: Peptide deformylase (167 aa).

Cys90 and His132 together coordinate Fe cation. The active site involves Glu133. His136 contacts Fe cation.

Belongs to the polypeptide deformylase family. Requires Fe(2+) as cofactor.

It carries out the reaction N-terminal N-formyl-L-methionyl-[peptide] + H2O = N-terminal L-methionyl-[peptide] + formate. Functionally, removes the formyl group from the N-terminal Met of newly synthesized proteins. Requires at least a dipeptide for an efficient rate of reaction. N-terminal L-methionine is a prerequisite for activity but the enzyme has broad specificity at other positions. This chain is Peptide deformylase, found in Dehalococcoides mccartyi (strain CBDB1).